Here is a 186-residue protein sequence, read N- to C-terminus: Ribosome-recycling factor (186 aa).

2 stretches are compositionally biased toward basic and acidic residues: residues 134–169 (RDAN…KKAE) and 176–186 (AKAREAEVMED). The interval 134 to 186 (RDANKAAETAEKDKEMTEDDRDKTKDQVQELTKKAETNVNESAKAREAEVMED) is disordered.

Belongs to the RRF family.

It localises to the cytoplasm. Functionally, responsible for the release of ribosomes from messenger RNA at the termination of protein biosynthesis. May increase the efficiency of translation by recycling ribosomes from one round of translation to another. The polypeptide is Ribosome-recycling factor (Rhodopirellula baltica (strain DSM 10527 / NCIMB 13988 / SH1)).